A 96-amino-acid polypeptide reads, in one-letter code: ESAT-6-like protein SAG0230 (96 aa).

The protein belongs to the WXG100 family. sagEsxA-like subfamily. In terms of assembly, homodimer.

The protein is ESAT-6-like protein SAG0230 of Streptococcus agalactiae serotype V (strain ATCC BAA-611 / 2603 V/R).